We begin with the raw amino-acid sequence, 199 residues long: NAD(P)H dehydrogenase (quinone) (199 aa).

A Flavodoxin-like domain is found at 4–190; the sequence is ILVLYYSMYG…TIARYQGEHV (187 aa). Residues 10 to 15 and 79 to 81 contribute to the FMN site; these read SMYGHI and TRF. Y12 lines the NAD(+) pocket. W99 is a binding site for substrate. Residues 114–119 and H134 contribute to the FMN site; that span reads STGTGG.

The protein belongs to the WrbA family. The cofactor is FMN.

The enzyme catalyses a quinone + NADH + H(+) = a quinol + NAD(+). It carries out the reaction a quinone + NADPH + H(+) = a quinol + NADP(+). This is NAD(P)H dehydrogenase (quinone) from Serratia proteamaculans (strain 568).